The primary structure comprises 146 residues: Urease accessory protein UreE 1 (146 aa).

It belongs to the UreE family.

Its subcellular location is the cytoplasm. Involved in urease metallocenter assembly. Binds nickel. Probably functions as a nickel donor during metallocenter assembly. This is Urease accessory protein UreE 1 from Pseudomonas syringae pv. tomato (strain ATCC BAA-871 / DC3000).